Here is a 162-residue protein sequence, read N- to C-terminus: Cyclic pyranopterin monophosphate synthase (162 aa).

Residues Leu75–His77 and Met113–Glu114 each bind substrate. Asp128 is an active-site residue.

Belongs to the MoaC family. As to quaternary structure, homohexamer; trimer of dimers.

The catalysed reaction is (8S)-3',8-cyclo-7,8-dihydroguanosine 5'-triphosphate = cyclic pyranopterin phosphate + diphosphate. It functions in the pathway cofactor biosynthesis; molybdopterin biosynthesis. Catalyzes the conversion of (8S)-3',8-cyclo-7,8-dihydroguanosine 5'-triphosphate to cyclic pyranopterin monophosphate (cPMP). This chain is Cyclic pyranopterin monophosphate synthase, found in Klebsiella pneumoniae (strain 342).